The sequence spans 356 residues: Tyrosine recombinase XerS (356 aa).

The Core-binding (CB) domain maps to 16 to 121; that stretch reads IMPWYVLDYY…ALSSLYKYLT (106 aa). A Tyr recombinase domain is found at 169–354; the sequence is AFLDYVDKEY…VNDEQKNALD (186 aa). Active-site residues include Arg-210, Lys-234, His-306, Arg-309, and His-332. Tyr-341 functions as the O-(3'-phospho-DNA)-tyrosine intermediate in the catalytic mechanism.

The protein belongs to the 'phage' integrase family. XerS subfamily.

The protein resides in the cytoplasm. Its activity is regulated as follows. FtsK is required for recombination. Site-specific tyrosine recombinase, which acts by catalyzing the cutting and rejoining of the recombining DNA molecules. Essential to convert dimers of the bacterial chromosome into monomers to permit their segregation at cell division. The protein is Tyrosine recombinase XerS of Streptococcus pyogenes serotype M2 (strain MGAS10270).